The sequence spans 94 residues: DNA-binding protein HU (94 aa).

This sequence belongs to the bacterial histone-like protein family.

Its function is as follows. Histone-like DNA-binding protein which is capable of wrapping DNA to stabilize it, and thus to prevent its denaturation under extreme environmental conditions. The sequence is that of DNA-binding protein HU (hup) from Xylella fastidiosa (strain 9a5c).